A 158-amino-acid polypeptide reads, in one-letter code: MSSNVVETIQPVAAAIVSAHQFELVDLEFVREGQSWYLRLYIDKPGGINIEECAMVSDELSEKLDAMEPDPIPQAYFLEVSSPGAERPLKKEADFQNAIGKYVHVGLYQKLDGKKIFEGDLTAVTPTTLTIDYLDKTRHKTVTINREQISQARLAVKF.

It belongs to the RimP family.

The protein localises to the cytoplasm. In terms of biological role, required for maturation of 30S ribosomal subunits. The protein is Ribosome maturation factor RimP of Lactiplantibacillus plantarum (strain ATCC BAA-793 / NCIMB 8826 / WCFS1) (Lactobacillus plantarum).